Here is a 159-residue protein sequence, read N- to C-terminus: Large ribosomal subunit protein uL15 (159 aa).

The disordered stretch occupies residues 14-44 (ASRKRVGRGRATGWGCTSGRGNKGQNSRAGA). The segment covering 23–35 (RATGWGCTSGRGN) has biased composition (gly residues).

Belongs to the universal ribosomal protein uL15 family. In terms of assembly, part of the 50S ribosomal subunit.

Functionally, binds to the 23S rRNA. This chain is Large ribosomal subunit protein uL15, found in Solidesulfovibrio magneticus (strain ATCC 700980 / DSM 13731 / RS-1) (Desulfovibrio magneticus).